Consider the following 690-residue polypeptide: Signal peptide peptidase-like 2C (690 aa).

Residues 1 to 28 (MACLGSLHPLGSLLLLFLLLLLSPEARG) form the signal peptide. Residues 29-192 (EYGLVRVVSK…APLEPVTDYN (164 aa)) are Lumenal-facing. The PA domain maps to 87 to 166 (DSSPRQRPLH…AVLRYTDMLD (80 aa)). The N-linked (GlcNAc...) asparagine glycan is linked to Asn-106. The helical transmembrane segment at 193–213 (MAIIFILAVGTVAAGGYWAGL) threads the bilayer. Residues 214 to 260 (MEANKLQRRQAQRGGGLGGHNQQQTVAAERSQRAWEDDDFEDAPMDF) lie on the Cytoplasmic side of the membrane. A helical transmembrane segment spans residues 261-283 (TPAMTGAVVTMSCSIMILLYFFY). Residue Asp-284 is a topological domain, lumenal. Residues 285–307 (CFVYVMIGIFSLGASTGLYSCLA) form a helical membrane-spanning segment. Over 308–328 (PILCHLPLWRYQWVLPGQRVS) the chain is Cytoplasmic. The chain crosses the membrane as a helical span at residues 329–349 (VTWPLLLLAGLCAMVTVLWVI). Residues 350–354 (HRNED) lie on the Lumenal side of the membrane. The helical transmembrane segment at 355 to 373 (HWAWLLQDTLGVAYCLFVL) threads the bilayer. Over 374–384 (RRVRLPTFKNC) the chain is Cytoplasmic. The helical transmembrane segment at 385–405 (TLFLLALLAFDVFFVFITPLF) threads the bilayer. Asp-395 is an active-site residue. Topologically, residues 406–448 (TKTGESIMVEVASGPADSSSHERLPMVLKVPRLSFSALTLCNQ) are lumenal. A helical membrane pass occupies residues 449–469 (PFSILGFGDIVVPGFLVAYCH). Asp-457 is a catalytic residue. At 470-482 (RFDMQVQSRQVYY) the chain is on the cytoplasmic side. A helical transmembrane segment spans residues 483–503 (MACTVAYAVGLLVTFVAMILM). Residue Gln-504 is a topological domain, lumenal. Residues 505-525 (MGQPALLYLVSSTLLTSLAVA) form a helical membrane-spanning segment. A PAL motif is present at residues 508–510 (PAL). Residues 526-690 (TCRQEFTLFW…KKSMSAQAPL (165 aa)) are Cytoplasmic-facing. The segment covering 564 to 573 (EDAKDSRTTN) has biased composition (basic and acidic residues). Positions 564 to 633 (EDAKDSRTTN…DPNELPSGSP (70 aa)) are disordered. Positions 615–624 (SEGWSDTNLD) are enriched in polar residues.

It belongs to the peptidase A22B family. As to quaternary structure, interacts (via active sites) with FREY; the interaction stabilizes FREY1 protein and inhibits SPPL2C proteolytic activity. Post-translationally, glycosylated. Highly expressed in testis where it is primarily localised in spermatids (at protein level).

The protein localises to the endoplasmic reticulum membrane. In terms of biological role, sperm-specific intramembrane-cleaving aspartic protease (I-CLiP) that cleaves distinct tail-anchored proteins and SNARE proteins. In elongated spermatids, modulates intracellular Ca(2+) homeostasis by controlling PLN abundance through proteolytic cleavage. During spermatogenesis, processes SNARE proteins and impacts vesicular trafficking which supports compartmental reorganization in maturating spermatids and may play a role in formation of the acrosome. Functionally, in round spermatids, acts as a scaffold protein supporting FREY1 in IZUMO1 recruitment at the endoplasmic reticulum membrane and coordination of IZUMO1 complex assembly. Stabilizes FREY1 at the endoplasmic reticulum membrane through interaction. May recruit IZUMO1 interaction partners. No difference in cleavage specificity compared to isoform 1. The sequence is that of Signal peptide peptidase-like 2C from Mus musculus (Mouse).